The primary structure comprises 191 residues: Dephospho-CoA kinase (191 aa).

The 189-residue stretch at 3–191 folds into the DPCK domain; sequence AIGITGSYAS…KLILVIARKL (189 aa). 11-16 contacts ATP; sequence ASGKTF.

The protein belongs to the CoaE family.

The protein resides in the cytoplasm. It catalyses the reaction 3'-dephospho-CoA + ATP = ADP + CoA + H(+). It participates in cofactor biosynthesis; coenzyme A biosynthesis; CoA from (R)-pantothenate: step 5/5. Its function is as follows. Catalyzes the phosphorylation of the 3'-hydroxyl group of dephosphocoenzyme A to form coenzyme A. This Rickettsia felis (strain ATCC VR-1525 / URRWXCal2) (Rickettsia azadi) protein is Dephospho-CoA kinase.